Consider the following 490-residue polypeptide: Cytochrome P450 2C12, female-specific (490 aa).

Cys-435 is a binding site for heme.

The protein belongs to the cytochrome P450 family. The cofactor is heme.

Its subcellular location is the endoplasmic reticulum membrane. It localises to the microsome membrane. It carries out the reaction an organic molecule + reduced [NADPH--hemoprotein reductase] + O2 = an alcohol + oxidized [NADPH--hemoprotein reductase] + H2O + H(+). This P450 is active in 15-beta-hydroxylation of steroid sulfates. This Rattus norvegicus (Rat) protein is Cytochrome P450 2C12, female-specific (Cyp2c12).